We begin with the raw amino-acid sequence, 251 residues long: Phosphate import ATP-binding protein PstB 2 (251 aa).

An ABC transporter domain is found at 5 to 246 (ITTKDVHLYY…PDKEQTADYL (242 aa)). 37–44 (GPSGCGKS) serves as a coordination point for ATP.

It belongs to the ABC transporter superfamily. Phosphate importer (TC 3.A.1.7) family. The complex is composed of two ATP-binding proteins (PstB), two transmembrane proteins (PstC and PstA) and a solute-binding protein (PstS).

The protein localises to the cell membrane. It carries out the reaction phosphate(out) + ATP + H2O = ADP + 2 phosphate(in) + H(+). Part of the ABC transporter complex PstSACB involved in phosphate import. Responsible for energy coupling to the transport system. This is Phosphate import ATP-binding protein PstB 2 from Ligilactobacillus salivarius (strain UCC118) (Lactobacillus salivarius).